The primary structure comprises 367 residues: MLSPQDRQDKLVRATDLDALSCKYSINRNLYLNPPDEFVKDLVESYQRYLQYCVGYTGLSSSRALKGLFQEKKMPIINRGSYLRTRAIDQVVNKFIGEFKDRCQIVSLGSGSDTRAFQIFKSHANVIYHEIDFPESAKVKKLAILQNPVIRELVGTNETSPLINNKEQFESYSSELHTEKYHLHGIDLRTLKKPDSQIKGFQPEVPTLVISECVLCYLSPDEYQRTMNYWTEIADQNYMGFLIYEPMSLNDQFGETMTLNLQSRGLNLQTFSKYPDLISRKKFLEESCHLKNLRLTDMSYIGGYKVRQDGREWIDHKEMGRINKLEMIDEIEEIRLLLEHYCLIYGEYTEEKTLNFKGIDTWSWILS.

S-adenosyl-L-methionine is bound by residues arginine 84, glycine 109, aspartate 132, 187 to 188 (DL), and glutamate 212.

This sequence belongs to the methyltransferase superfamily. LCMT family.

It catalyses the reaction [phosphatase 2A protein]-C-terminal L-leucine + S-adenosyl-L-methionine = [phosphatase 2A protein]-C-terminal L-leucine methyl ester + S-adenosyl-L-homocysteine. Its function is as follows. Methylates the carboxyl group of the C-terminal leucine residue of protein phosphatase 2A catalytic subunits to form alpha-leucine ester residues. The polypeptide is Leucine carboxyl methyltransferase 1 (PPM1) (Candida albicans (strain SC5314 / ATCC MYA-2876) (Yeast)).